Here is a 304-residue protein sequence, read N- to C-terminus: MNNGIKEQIRELLKQHNAVLLAHNYMRDEVQEIADITGDSLALSIEAAKTEADVIVFCGVHFMAESAAILSPDKKVLLPRLDAGCPMADMVDARGLEELKKKHPGVPVVTYVNSTAEVKAHSDICCTSANATRVVKSLPDKKVIFAPDRNLGSFVAKSVPDKEFIFWDGYCPTHERMTVEAVLAKKTEYPEALFICHPECAPAVTALADQACSTSAMYDYCRDSKARQFIIGTEAGILYRLRLENPDKEFILASPALFCPNMKLTSQEDVLHSLKTLTPVVSVPEDIRLKAKLALDRMLAVPRD.

Iminosuccinate is bound by residues His23 and Ser40. Cys85 contacts [4Fe-4S] cluster. Residues 111 to 113 (YVN) and Ser128 contribute to the iminosuccinate site. Cys171 contacts [4Fe-4S] cluster. Iminosuccinate is bound by residues 197-199 (HPE) and Thr214. Cys259 is a binding site for [4Fe-4S] cluster.

The protein belongs to the quinolinate synthase family. Type 2 subfamily. [4Fe-4S] cluster is required as a cofactor.

The protein localises to the cytoplasm. It carries out the reaction iminosuccinate + dihydroxyacetone phosphate = quinolinate + phosphate + 2 H2O + H(+). Its pathway is cofactor biosynthesis; NAD(+) biosynthesis; quinolinate from iminoaspartate: step 1/1. Catalyzes the condensation of iminoaspartate with dihydroxyacetone phosphate to form quinolinate. The protein is Quinolinate synthase of Pelobacter propionicus (strain DSM 2379 / NBRC 103807 / OttBd1).